A 129-amino-acid chain; its full sequence is Probable protein cornichon homolog 2 (129 aa).

A run of 2 helical transmembrane segments spans residues 45 to 65 (FIVQGVLCVFYLLTGHWFMTL) and 105 to 125 (LAYIVLNLFLTIFWMIYSALD).

It belongs to the cornichon family.

Its subcellular location is the membrane. The protein is Probable protein cornichon homolog 2 of Arabidopsis thaliana (Mouse-ear cress).